Here is a 227-residue protein sequence, read N- to C-terminus: Probable septum site-determining protein MinC (227 aa).

This sequence belongs to the MinC family. Interacts with MinD and FtsZ.

In terms of biological role, cell division inhibitor that blocks the formation of polar Z ring septums. Rapidly oscillates between the poles of the cell to destabilize FtsZ filaments that have formed before they mature into polar Z rings. Prevents FtsZ polymerization. The protein is Probable septum site-determining protein MinC of Acetivibrio thermocellus (strain ATCC 27405 / DSM 1237 / JCM 9322 / NBRC 103400 / NCIMB 10682 / NRRL B-4536 / VPI 7372) (Clostridium thermocellum).